Consider the following 629-residue polypeptide: G1-specific transcription factors activator MSA1 (629 aa).

The segment covering 1 to 11 (MDKSMIKKRGR) has biased composition (basic residues). Disordered regions lie at residues 1-60 (MDKS…KRRL), 83-106 (STPT…NDSY), 217-286 (YCDT…SSLQ), 455-485 (VQVQ…NMNS), and 586-629 (PNLH…IDDQ). The segment covering 21 to 37 (PLQSPMAHSSMQVQKQG) has biased composition (polar residues). The span at 245–260 (IETSASPIGSARNNNI) shows a compositional bias: polar residues. Low complexity-rich tracts occupy residues 261–277 (LLSQ…QLKP) and 455–475 (VQVQ…RQFQ). Serine 268 is subject to Phosphoserine. Over residues 614-629 (KQDDARTALKRLIDDQ) the composition is skewed to basic and acidic residues.

Interacts with transcription complexes SCB-binding factor (SBF) and MCB-binding factor (MBF) at their target promoters. Interacts with MBP1 and SWI6. In terms of processing, phosphorylated by CDC28.

In terms of biological role, activator of G1-specific transcription factors, MBF and SBF. Promotes both the timing of G1-specific gene transcription and cell cycle initiation. Associates with SBF- and MBF-regulated target promoters and this binding is maximal during the G1 phase, prior to maximum budding. Affects cell cycle initiation by advancing the timing of transcription of G1-specific genes. Overexpression advances the timing of SBF-dependent transcription and budding. Depletion delays both indicators of cell cycle initiation. The protein is G1-specific transcription factors activator MSA1 (MSA1) of Saccharomyces cerevisiae (strain ATCC 204508 / S288c) (Baker's yeast).